We begin with the raw amino-acid sequence, 989 residues long: DNA-binding protein SMUBP-2 (989 aa).

Position 2 is an N-acetylalanine (A2). Residues 213-220 (GPPGTGKT), Q402, Y441, and E570 each bind ATP. Residues 637-783 (TAFEYLDDIV…KARHITVSRK (147 aa)) are SS DNA-binding. Disordered stretches follow at residues 650-717 (YTHE…GCDR), 765-818 (LRHD…GQPH), and 833-869 (LQRQQGSQAQPAKAQPGVGLHPQKTQQKKKKKETKGP). The span at 677–690 (EQENGQEARAAAGQ) shows a compositional bias: low complexity. The R3H domain occupies 721-784 (IDRTEHFRAM…ARHITVSRKS (64 aa)). The span at 765 to 775 (LRHDSTGEGKA) shows a compositional bias: basic and acidic residues. S797 and S800 each carry phosphoserine. Low complexity predominate over residues 833-842 (LQRQQGSQAQ). The short motif at 860-864 (KKKKK) is the Nuclear localization signal element. An AN1-type zinc finger spans residues 885-934 (IKADNTCSFAKCTASTTTLGQFCMHCSRRYCLSHHLPEIHGCGEKARAHA). 8 residues coordinate Zn(2+): C891, C896, C907, C910, C915, H918, H924, and C926. Positions 954 to 972 (ALDPAKRAQLQRRLDKKLG) are enriched in basic and acidic residues. The segment at 954–989 (ALDPAKRAQLQRRLDKKLGELSSQRTSKRKEKERGT) is disordered.

The protein belongs to the DNA2/NAM7 helicase family. As to quaternary structure, homooligomer. Interacts with RUVBL1. Interacts with RUVBL2. Interacts with GTF3C1. Interacts with ABT1. Interacts with ribosomes. In terms of tissue distribution, high expression in brain and testis, moderate in heart, spleen, and kidney, and low in other tissues.

The protein resides in the nucleus. Its subcellular location is the cytoplasm. It localises to the cell projection. It is found in the axon. The enzyme catalyses ATP + H2O = ADP + phosphate + H(+). 5' to 3' helicase that unwinds RNA and DNA duplexes in an ATP-dependent reaction. Specific to 5'-phosphorylated single-stranded guanine-rich sequences. May play a role in RNA metabolism, ribosome biogenesis or initiation of translation. May play a role in regulation of transcription. Interacts with tRNA-Tyr. In Mesocricetus auratus (Golden hamster), this protein is DNA-binding protein SMUBP-2 (IGHMBP2).